Reading from the N-terminus, the 630-residue chain is Multidrug transporter TPO3 (630 aa).

Positions 1 to 35 are enriched in polar residues; the sequence is MVDQESLVSFSSETSQSINSDIDIESQQQPRQYIP. Disordered stretches follow at residues 1 to 46 and 107 to 157; these read MVDQ…KERL and TSTA…NQQP. Basic and acidic residues predominate over residues 37-46; the sequence is NEKDGNKERL. Residues 125 to 137 show a composition bias toward low complexity; it reads RRSQNIAASSNSS. N135 carries an N-linked (GlcNAc...) asparagine glycan. Helical transmembrane passes span 190-210, 222-242, 252-272, 282-302, 312-332, 342-362, 423-443, 453-473, 494-514, 519-539, 553-575, and 587-607; these read ILSC…GGLF, AAIL…LIWS, LAYF…ALSP, FLCG…IADM, IAFF…VNGF, LIFW…AFIP, FYVC…PVVF, LIGL…ATTF, LFGA…LGAT, IIWV…VLIY, YASS…FPLF, and WASW…FGFY.

Belongs to the major facilitator superfamily. DHA1 family. Polyamines/proton antiporter (TC 2.A.1.2.16) subfamily.

It is found in the cell membrane. Cell membrane polyamine/proton antiporter, involved in the detoxification of excess polyamines in the cytoplasm. Involved in the resistance to the imidazole antifungal drugs tioconazole, miconazole, clotrimazole and ketoconazole; to the triazole fluconazole; but not to the antifungals flucytosine or amphotericin B. Plays a role in spermine homeostasis, but spermine accumulation in response to clotrimazole is independent of TPO3. The protein is Multidrug transporter TPO3 of Candida glabrata (strain ATCC 2001 / BCRC 20586 / JCM 3761 / NBRC 0622 / NRRL Y-65 / CBS 138) (Yeast).